The sequence spans 231 residues: Lipoprotein-releasing system ATP-binding protein LolD (231 aa).

Residues 9-230 (FSLKDVGKEY…LRAGELYDQN (222 aa)) form the ABC transporter domain. 45–52 (GASGSGKS) is a binding site for ATP.

This sequence belongs to the ABC transporter superfamily. Lipoprotein translocase (TC 3.A.1.125) family. As to quaternary structure, the complex is composed of two ATP-binding proteins (LolD) and two transmembrane proteins (LolC and LolE).

The protein localises to the cell inner membrane. In terms of biological role, part of the ABC transporter complex LolCDE involved in the translocation of mature outer membrane-directed lipoproteins, from the inner membrane to the periplasmic chaperone, LolA. Responsible for the formation of the LolA-lipoprotein complex in an ATP-dependent manner. The protein is Lipoprotein-releasing system ATP-binding protein LolD of Oleidesulfovibrio alaskensis (strain ATCC BAA-1058 / DSM 17464 / G20) (Desulfovibrio alaskensis).